We begin with the raw amino-acid sequence, 83 residues long: UPF0512 protein I (83 aa).

The protein belongs to the UPF0512 family.

The protein is UPF0512 protein I of Dictyostelium discoideum (Social amoeba).